A 305-amino-acid chain; its full sequence is Tyrosine recombinase XerC (305 aa).

The 87-residue stretch at Asn-2–Glu-88 folds into the Core-binding (CB) domain. The Tyr recombinase domain maps to Pro-109–Met-294. Catalysis depends on residues Arg-149, Lys-173, His-246, Arg-249, and His-272. Catalysis depends on Tyr-281, which acts as the O-(3'-phospho-DNA)-tyrosine intermediate.

It belongs to the 'phage' integrase family. XerC subfamily. In terms of assembly, forms a cyclic heterotetrameric complex composed of two molecules of XerC and two molecules of XerD.

It is found in the cytoplasm. Functionally, site-specific tyrosine recombinase, which acts by catalyzing the cutting and rejoining of the recombining DNA molecules. The XerC-XerD complex is essential to convert dimers of the bacterial chromosome into monomers to permit their segregation at cell division. It also contributes to the segregational stability of plasmids. The polypeptide is Tyrosine recombinase XerC (Oceanobacillus iheyensis (strain DSM 14371 / CIP 107618 / JCM 11309 / KCTC 3954 / HTE831)).